Consider the following 395-residue polypeptide: Acetate kinase (395 aa).

A Mg(2+)-binding site is contributed by Asn-8. Lys-15 lines the ATP pocket. Residue Arg-90 coordinates substrate. Catalysis depends on Asp-147, which acts as the Proton donor/acceptor. ATP contacts are provided by residues 207–211 (HLGNG), 284–286 (DMR), and 330–334 (GIGEN). Glu-383 contributes to the Mg(2+) binding site.

This sequence belongs to the acetokinase family. In terms of assembly, homodimer. The cofactor is Mg(2+). Mn(2+) serves as cofactor.

The protein resides in the cytoplasm. It carries out the reaction acetate + ATP = acetyl phosphate + ADP. The protein operates within metabolic intermediate biosynthesis; acetyl-CoA biosynthesis; acetyl-CoA from acetate: step 1/2. In terms of biological role, catalyzes the formation of acetyl phosphate from acetate and ATP. Can also catalyze the reverse reaction. In Enterococcus faecalis (strain ATCC 700802 / V583), this protein is Acetate kinase.